We begin with the raw amino-acid sequence, 405 residues long: Glyceraldehyde-3-phosphate dehydrogenase A, chloroplastic (405 aa).

The N-terminal 68 residues, Met1–Ala68, are a transit peptide targeting the chloroplast. NADP(+)-binding positions include Arg80 to Ile81, Asp104, and Arg149. D-glyceraldehyde 3-phosphate-binding positions include Ser221–Thr223, Thr252, Arg267, Thr280–Gly281, and Arg303. Residue Cys222 is the Nucleophile of the active site. An NADP(+)-binding site is contributed by Asn385.

This sequence belongs to the glyceraldehyde-3-phosphate dehydrogenase family. In terms of assembly, tetramer of either four A chains (GAPDH 2) or two A and two B chains (GAPDH 1).

It is found in the plastid. The protein resides in the chloroplast. The catalysed reaction is D-glyceraldehyde 3-phosphate + phosphate + NADP(+) = (2R)-3-phospho-glyceroyl phosphate + NADPH + H(+). The protein operates within carbohydrate biosynthesis; Calvin cycle. In Pisum sativum (Garden pea), this protein is Glyceraldehyde-3-phosphate dehydrogenase A, chloroplastic (GAPA).